The primary structure comprises 95 residues: Co-chaperonin GroES (95 aa).

Belongs to the GroES chaperonin family. As to quaternary structure, heptamer of 7 subunits arranged in a ring. Interacts with the chaperonin GroEL.

The protein localises to the cytoplasm. In terms of biological role, together with the chaperonin GroEL, plays an essential role in assisting protein folding. The GroEL-GroES system forms a nano-cage that allows encapsulation of the non-native substrate proteins and provides a physical environment optimized to promote and accelerate protein folding. GroES binds to the apical surface of the GroEL ring, thereby capping the opening of the GroEL channel. The chain is Co-chaperonin GroES from Ruthia magnifica subsp. Calyptogena magnifica.